Consider the following 39-residue polypeptide: L-amino-acid oxidase (39 aa).

It belongs to the flavin monoamine oxidase family. FIG1 subfamily. Monomer. This is in contrast with most of its orthologs, that are non-covalently linked homodimers. FAD is required as a cofactor. N-glycosylated. In terms of tissue distribution, expressed by the venom gland.

Its subcellular location is the secreted. It carries out the reaction an L-alpha-amino acid + O2 + H2O = a 2-oxocarboxylate + H2O2 + NH4(+). The catalysed reaction is L-leucine + O2 + H2O = 4-methyl-2-oxopentanoate + H2O2 + NH4(+). Its function is as follows. Catalyzes an oxidative deamination of predominantly hydrophobic and aromatic L-amino acids, thus producing hydrogen peroxide that may contribute to the diverse toxic effects of this enzyme. Shows activity on L-Leu. Exhibits diverse biological activities, such as hemorrhage, hemolysis, edema, apoptosis of vascular endothelial cells or tumor cell lines, and antiparasitic activities, as well as regulation of platelet aggregation. Effects of snake L-amino oxidases on platelets are controversial, since they either induce aggregation or inhibit agonist-induced aggregation. These different effects are probably due to different experimental conditions. In addition, this protein inhibits dose-dependently the growth of Gram-positive, Gram-negative bacteria and yeast, probably by the generation of hydrogen peroxide. The protein is L-amino-acid oxidase of Bothrops marajoensis (Marajo lancehead).